We begin with the raw amino-acid sequence, 386 residues long: Putative F-box/kelch-repeat protein At4g11750 (386 aa).

The region spanning 5–51 (PVDLPYIPDDLLLNCLARVSRLYYPILSLVSKRFRSLVASLELYEIR) is the F-box domain. 3 Kelch repeats span residues 187 to 236 (KIYV…VYDG), 238 to 285 (LYLF…YGRS), and 287 to 324 (VLMW…GYSG).

This Arabidopsis thaliana (Mouse-ear cress) protein is Putative F-box/kelch-repeat protein At4g11750.